We begin with the raw amino-acid sequence, 767 residues long: MAKLHHLGFPRIGNKRQLKFALEKFWGGELSEQQLQTSAADLRQQNWLDQQDLALDLYTVGDFSLYDQVLDMSFLVGNIPSRAKQSEQDNSLDNYFRVARGRSQPQECCAASHGQSGESQAGEMTKWFNTNYHYIVPEFDAQTTFLLNAKQLLLQIEALQKINKNVKPVIIGPVTYLWLGKEKDNSQKLTLLPELLEVYAELLALFAEKNITWVQIDEPILVLEIPKQWQEALQSSYQKLGQSKVKLLLTTYFGELKNNLKLACELPIAGLHLDAVNAPHEIDSAIDYLGTDKILSLGIINACNIWKTDLNQTLNQLLPIHQKLQDRLWLAPSSSLLHVPIDLNNEDKLDYEVKSWLAFAVQKLQELSLIGRALNDGLSSVEAAFTYNKLCIENRRQSPQVHKQDIKSKVLNITPELGQRNLAIKQREALQQSYLNLPSYPTTTIGSFPQTSDIRQLRQAKRLGDINEEQYKKSIKESIEFCINEQDQLGLDVLVHGEAERNDMVEYFGELLDGFVFTQFAWVQSYGSRCVKPPILFGDVSRPKAMTVEWSSYAQSLTEKKVKGMLTGPVTILNWSFVRDDQPLQTTCMQIALAIREEVLDLEKAGINIIQIDEAALREKLPLHRSQWQQYLNWAIAAFRLCANGVNDKTQIHTHMCYSEFNDIIAAIAQMDADVITIETSRSDMVLLDVFEAFSYPNGIGPGVYDIHSPNIPDVEQMVSLMKKAALRIPAEQLWVNPDCGLKTRRWEEVKPALLNMVAAAKKLRAS.

Lys-126 contacts 5-methyltetrahydropteroyltri-L-glutamate. L-homocysteine is bound by residues 445–447 (IGS) and Glu-498. L-methionine-binding positions include 445–447 (IGS) and Glu-498. 5-methyltetrahydropteroyltri-L-glutamate is bound by residues 529–530 (RC) and Trp-575. Asp-613 is an L-homocysteine binding site. An L-methionine-binding site is contributed by Asp-613. Glu-619 contacts 5-methyltetrahydropteroyltri-L-glutamate. Zn(2+) contacts are provided by His-655, Cys-657, and Glu-679. His-708 serves as the catalytic Proton donor. Cys-740 is a binding site for Zn(2+).

The protein belongs to the vitamin-B12 independent methionine synthase family. Zn(2+) is required as a cofactor.

The enzyme catalyses 5-methyltetrahydropteroyltri-L-glutamate + L-homocysteine = tetrahydropteroyltri-L-glutamate + L-methionine. Its pathway is amino-acid biosynthesis; L-methionine biosynthesis via de novo pathway; L-methionine from L-homocysteine (MetE route): step 1/1. In terms of biological role, catalyzes the transfer of a methyl group from 5-methyltetrahydrofolate to homocysteine resulting in methionine formation. This is 5-methyltetrahydropteroyltriglutamate--homocysteine methyltransferase from Psychromonas ingrahamii (strain DSM 17664 / CCUG 51855 / 37).